Reading from the N-terminus, the 277-residue chain is Undecaprenyl-diphosphatase (277 aa).

Helical transmembrane passes span 19–39 (FLPVSSTGHLFLFSSFFPFYG), 44–64 (FDDLFDIFIQSGAILSVLFLY), 89–109 (FHFLIQICIGAFPILIAGFIA), 122–142 (LLEILSGAWIFGGVLILVAEW), 154–174 (IGFKDSILIGIFQCMALIPGM), 195–215 (AEFSFFLAVPVLLAAGIYKLI), 224–244 (NTIPVLMFGFLVSFLLCTLVI), and 257–277 (SVFGVYRILLGVGVLVLTKLI).

It belongs to the UppP family.

It localises to the cell inner membrane. It catalyses the reaction di-trans,octa-cis-undecaprenyl diphosphate + H2O = di-trans,octa-cis-undecaprenyl phosphate + phosphate + H(+). In terms of biological role, catalyzes the dephosphorylation of undecaprenyl diphosphate (UPP). Confers resistance to bacitracin. In Leptospira interrogans serogroup Icterohaemorrhagiae serovar copenhageni (strain Fiocruz L1-130), this protein is Undecaprenyl-diphosphatase.